The primary structure comprises 272 residues: uncharacterized protein (272 aa).

Residue Lys185 is the Schiff-base intermediate with substrate of the active site.

Belongs to the DeoC/FbaB aldolase family.

This is an uncharacterized protein from Saccharolobus solfataricus (strain ATCC 35092 / DSM 1617 / JCM 11322 / P2) (Sulfolobus solfataricus).